Consider the following 366-residue polypeptide: Lipase member J (366 aa).

Serine 141 acts as the Nucleophile in catalysis. Catalysis depends on charge relay system residues aspartate 312 and histidine 341.

It belongs to the AB hydrolase superfamily. Lipase family.

This Homo sapiens (Human) protein is Lipase member J (LIPJ).